The primary structure comprises 774 residues: Transforming acidic coiled-coil-containing protein 1 (774 aa).

Ala-2 carries the post-translational modification N-acetylalanine. The segment at 2–56 (AFSPWQILSPVQWAKWTWSAVRGSGAGEDEAGGPEGDPEEEEDSQAETKSLSFSS) is interaction with LSM7 and SNRPG. 3 positions are modified to phosphoserine: Ser-4, Ser-10, and Ser-45. The segment at 21 to 142 (AVRGSGAGED…VKDVRGKAEH (122 aa)) is disordered. Acidic residues predominate over residues 28–46 (GEDEAGGPEGDPEEEEDSQ). Polar residues predominate over residues 48–61 (ETKSLSFSSDSEGN). Basic and acidic residues predominate over residues 88–99 (PEAKPQESREAD). Residues 113–128 (DTCSRSSENEAPQATV) are compositionally biased toward polar residues. The span at 131-142 (HPVKDVRGKAEH) shows a compositional bias: basic and acidic residues. Phosphoserine occurs at positions 148 and 154. The interval 153-255 (FSIETRNCTD…PEMLMEGSPL (103 aa)) is interaction with TDRD7. The segment at 207–424 (EAFTEASLKT…NNINTDDSGD (218 aa)) is interaction with YEATS4. Positions 214–428 (LKTGGPCPEP…TDDSGDPCKP (215 aa)) are disordered. SPAZ domains are found at residues 216-294 (TGGP…TAGV) and 354-504 (SKPV…TDEE). The residue at position 228 (Ser-228) is a Phosphoserine; by AURKC. Positions 228–241 (SKLRKPKPVSLRKK) are enriched in basic residues. A phosphoserine mark is found at Ser-376 and Ser-401. The segment covering 397 to 407 (ILQNSPPLSSK) has biased composition (polar residues). Positions 452–468 (PKKAKSRLITSGCKVKK) match the Bipartite nuclear localization signal motif. A phosphoserine mark is found at Ser-480 and Ser-560. Residues 579-774 (IREEIITKEI…ELIAKLGKTD (196 aa)) adopt a coiled-coil conformation. The interaction with CH-TOG stretch occupies residues 670-774 (VLEGFKKNEE…ELIAKLGKTD (105 aa)).

This sequence belongs to the TACC family. In terms of assembly, interacts with CH-TOG and YEATS4. Interacts with the AURKA and AURKB and AURKC. Interacts with LSM7, TDRD7 and SNRPG. Interacts with GCN5L2 and PCAF. Interacts with the thyroid hormone receptors THRB and THRA, predominantly with isoform alpha-2. The interaction with THRA isoform alpha-1 and THRB is decreased in the presence of thyroid hormone T3. Interacts with RARA in the nucleus. Also interacts with other nuclear receptors, including ESR1, NR3C1, PPARG and RXRA, preferentially in the absence of their hormonal ligands.

It localises to the cytoplasm. Its subcellular location is the nucleus. The protein localises to the cytoskeleton. The protein resides in the microtubule organizing center. It is found in the centrosome. It localises to the midbody. Its function is as follows. Involved in transcription regulation induced by nuclear receptors, including in T3 thyroid hormone and all-trans retinoic acid pathways. Might promote the nuclear localization of the receptors. Likely involved in the processes that promote cell division prior to the formation of differentiated tissues. This chain is Transforming acidic coiled-coil-containing protein 1 (Tacc1), found in Mus musculus (Mouse).